Consider the following 430-residue polypeptide: Enolase (430 aa).

Gln-165 contributes to the (2R)-2-phosphoglycerate binding site. Glu-207 (proton donor) is an active-site residue. Residues Asp-244, Glu-287, and Asp-314 each coordinate Mg(2+). Lys-339, Arg-368, Ser-369, and Lys-390 together coordinate (2R)-2-phosphoglycerate. Residue Lys-339 is the Proton acceptor of the active site.

This sequence belongs to the enolase family. In terms of assembly, component of the RNA degradosome, a multiprotein complex involved in RNA processing and mRNA degradation. Mg(2+) serves as cofactor.

The protein resides in the cytoplasm. It is found in the secreted. The protein localises to the cell surface. It carries out the reaction (2R)-2-phosphoglycerate = phosphoenolpyruvate + H2O. Its pathway is carbohydrate degradation; glycolysis; pyruvate from D-glyceraldehyde 3-phosphate: step 4/5. Functionally, catalyzes the reversible conversion of 2-phosphoglycerate (2-PG) into phosphoenolpyruvate (PEP). It is essential for the degradation of carbohydrates via glycolysis. This chain is Enolase, found in Xylella fastidiosa (strain 9a5c).